Reading from the N-terminus, the 112-residue chain is Large ribosomal subunit protein bL17 (112 aa).

The protein belongs to the bacterial ribosomal protein bL17 family. Part of the 50S ribosomal subunit. Contacts protein L32.

The polypeptide is Large ribosomal subunit protein bL17 (Thermoanaerobacter pseudethanolicus (strain ATCC 33223 / 39E) (Clostridium thermohydrosulfuricum)).